We begin with the raw amino-acid sequence, 309 residues long: Cysteinyl leukotriene receptor 2 (309 aa).

Residues 1 to 26 (MEVTGTPSSYSNRNCTIENFKKEFYP) lie on the Extracellular side of the membrane. A glycan (N-linked (GlcNAc...) asparagine) is linked at asparagine 14. Residues 27–47 (IIYLIIFFWGALGNGFSIYVF) form a helical membrane-spanning segment. At 48 to 56 (LQTCKKSTS) the chain is on the cytoplasmic side. A helical transmembrane segment spans residues 57-77 (VNVFMLNLATSDFLFISTLPF). The Extracellular portion of the chain corresponds to 78–98 (RADYYFRGSNWIFGDLACRVM). A disulfide bond links cysteine 95 and cysteine 171. The chain crosses the membrane as a helical span at residues 99–119 (SYSLYVNMYTSIYFLTVLSVV). The Cytoplasmic segment spans residues 120-138 (RFLATVHPFRMFHVTSVRS). Residues 139-159 (AWILCGIIWVFIMASSALLLV) form a helical membrane-spanning segment. Topologically, residues 160 to 187 (NGQEEKDNIISCLELSPQKFKSLLIMNH) are extracellular. Residues 188–208 (IAVAVGFLLPFLTLTVCYLLI) form a helical membrane-spanning segment. Topologically, residues 209 to 229 (IRILLKAEIPESGPRAAHRKA) are cytoplasmic. A helical transmembrane segment spans residues 230 to 250 (LTTIVIAMITFLLCFLPYHAL). Over 251–271 (RTLHLVTWDKDSCGDVLHKAT) the chain is Extracellular. A helical transmembrane segment spans residues 272-292 (VITLTMAAANSCFNPFLYYFA). At 293 to 309 (GENFKARLRAIFSKVHL) the chain is on the cytoplasmic side.

The protein belongs to the G-protein coupled receptor 1 family. In terms of tissue distribution, widely expressed at low levels, with highest expression in the spleen, thymus and adrenal gland, and lower in the kidney, brain and peripheral blood leukocytes.

Its subcellular location is the cell membrane. Functionally, receptor for cysteinyl leukotrienes. The response is mediated via a G-protein that activates a phosphatidylinositol-calcium second messenger system. The rank order of affinities for the leukotrienes is LTC4 = LTD4 &gt;&gt; LTE4. This chain is Cysteinyl leukotriene receptor 2 (Cysltr2), found in Mus musculus (Mouse).